We begin with the raw amino-acid sequence, 146 residues long: Cyanate hydratase (146 aa).

Active-site residues include arginine 87, glutamate 90, and serine 113.

This sequence belongs to the cyanase family.

It carries out the reaction cyanate + hydrogencarbonate + 3 H(+) = NH4(+) + 2 CO2. Functionally, catalyzes the reaction of cyanate with bicarbonate to produce ammonia and carbon dioxide. In Nostoc sp. (strain PCC 7120 / SAG 25.82 / UTEX 2576), this protein is Cyanate hydratase.